Consider the following 231-residue polypeptide: Endonuclease NucS (231 aa).

Belongs to the NucS endonuclease family.

It localises to the cytoplasm. Functionally, cleaves both 3' and 5' ssDNA extremities of branched DNA structures. The sequence is that of Endonuclease NucS from Beutenbergia cavernae (strain ATCC BAA-8 / DSM 12333 / CCUG 43141 / JCM 11478 / NBRC 16432 / NCIMB 13614 / HKI 0122).